The primary structure comprises 616 residues: Xaa-Pro aminopeptidase app-1 (616 aa).

A peptide contacts are provided by Arg-78 and His-392. Zn(2+) contacts are provided by Asp-413, Asp-424, and His-487. 3 residues coordinate a peptide: His-487, His-496, and Glu-522. Zn(2+) contacts are provided by Glu-522 and Glu-536.

It belongs to the peptidase M24B family. In terms of assembly, homodimer. May interact with pid-2, pid-4 and pid-5. The cofactor is Zn(2+). Specifically expressed in the intestine.

It localises to the cytoplasm. The catalysed reaction is Release of any N-terminal amino acid, including proline, that is linked to proline, even from a dipeptide or tripeptide.. With respect to regulation, strongly inhibited by the metal ion chelators EDTA and 1,10-phenanthroline. Also inhibited by apstatin. Activity towards bradykinin is inhibited by Mn(2+) and Zn(2+) at all concentrations tested, whereas Co(2+) is inhibitory at concentrations above 100 uM and activatory at 10 uM. In terms of biological role, catalyzes the removal of a penultimate prolyl residue from the N-termini of peptides, such as Arg-Pro-Pro. Has activity towards the flp-9 neuropeptide KPSFVRF-amide. In Caenorhabditis elegans, this protein is Xaa-Pro aminopeptidase app-1.